Consider the following 172-residue polypeptide: uncharacterized protein (172 aa).

Over residues 147-159 (AGSGSGSGSGSGS) the composition is skewed to gly residues. Residues 147–172 (AGSGSGSGSGSGSDTGPFKKSQYKIL) form a disordered region.

This is an uncharacterized protein from Homo sapiens (Human).